A 2233-amino-acid polypeptide reads, in one-letter code: Acetyl-CoA carboxylase (2233 aa).

Ser-2 bears the N-acetylserine mark. Ser-2 is subject to Phosphoserine. Positions 58 to 567 constitute a Biotin carboxylation domain; the sequence is VISKILIANN…TTGWLDDLIT (510 aa). An ATP-grasp domain is found at 216–408; sequence KTGLVSVDDD…LPAAQLQIAM (193 aa). An ATP-binding site is contributed by 256-261; the sequence is GGGGKG. Mn(2+) contacts are provided by Glu-365, Glu-379, and Asn-381. Arg-383 is a catalytic residue. Positions 694–768 constitute a Biotinyl-binding domain; that stretch reads LEVENDPTQL…VAGDIMAIMT (75 aa). The residue at position 735 (Lys-735) is an N6-biotinyllysine. Phosphoserine is present on residues Ser-790, Ser-1148, Ser-1157, and Ser-1162. Residues 1486–1822 form the CoA carboxyltransferase N-terminal domain; the sequence is PYPVKEWLQP…KRNMPVPILE (337 aa). The tract at residues 1486–2141 is carboxyltransferase; the sequence is PYPVKEWLQP…EEYLIKRLSH (656 aa). Acetyl-CoA is bound at residue 1627 to 1629; that stretch reads ARI. Arg-1731 lines the CoA pocket. Positions 1826–2141 constitute a CoA carboxyltransferase C-terminal domain; sequence TWDRPVDFTP…EEYLIKRLSH (316 aa). Residue Gly-1998 participates in acetyl-CoA binding. CoA contacts are provided by Lys-2034 and Arg-2036.

As to quaternary structure, homodimer. Requires biotin as cofactor. Mn(2+) serves as cofactor.

Its subcellular location is the cytoplasm. The protein localises to the endoplasmic reticulum membrane. It catalyses the reaction hydrogencarbonate + acetyl-CoA + ATP = malonyl-CoA + ADP + phosphate + H(+). The catalysed reaction is N(6)-biotinyl-L-lysyl-[protein] + hydrogencarbonate + ATP = N(6)-carboxybiotinyl-L-lysyl-[protein] + ADP + phosphate + H(+). It participates in lipid metabolism; malonyl-CoA biosynthesis; malonyl-CoA from acetyl-CoA: step 1/1. With respect to regulation, by phosphorylation. The catalytic activity is inhibited by soraphen A, a polyketide isolated from the myxobacterium Sorangium cellulosum and a potent inhibitor of fungal growth. In terms of biological role, carries out three functions: biotin carboxyl carrier protein, biotin carboxylase and carboxyltransferase. Involved in the synthesis of very-long-chain fatty acid synthesis which is required to maintain a functional nuclear envelope. Required for acylation and vacuolar membrane association of VAC8 which is necessary to maintain a normal morphology of the vacuole. This Saccharomyces cerevisiae (strain ATCC 204508 / S288c) (Baker's yeast) protein is Acetyl-CoA carboxylase (ACC1).